A 116-amino-acid polypeptide reads, in one-letter code: Large ribosomal subunit protein bL19 (116 aa).

The protein belongs to the bacterial ribosomal protein bL19 family.

Functionally, this protein is located at the 30S-50S ribosomal subunit interface and may play a role in the structure and function of the aminoacyl-tRNA binding site. The protein is Large ribosomal subunit protein bL19 (rplS) of Geobacillus stearothermophilus (Bacillus stearothermophilus).